The sequence spans 1320 residues: CAP-Gly domain-containing linker protein 1 (1320 aa).

The tract at residues M1–E53 is disordered. Positions T21–K35 are enriched in low complexity. S48 is modified (phosphoserine). T50 is subject to Phosphothreonine. The CAP-Gly 1 domain occupies G78–R120. The interval G97 to G101 is important for tubulin binding. S146 carries the phosphoserine modification. Polar residues predominate over residues V156–S171. Residues V156–T181 form a disordered region. T181 carries the phosphothreonine modification. A phosphoserine mark is found at S194, S196, S199, and S203. The CAP-Gly 2 domain occupies G231 to P273. The span at T301–R331 shows a compositional bias: low complexity. The tract at residues T301–T338 is disordered. A Phosphoserine modification is found at S309. Residue S311 is modified to Phosphoserine; by PKA. Phosphoserine occurs at positions 314 and 347. The tract at residues S1089 to A1109 is disordered. Basic and acidic residues predominate over residues R1096–A1109. S1116 carries the post-translational modification Phosphoserine. The segment at K1178–S1201 is disordered. Residues Q1180–V1190 are compositionally biased toward polar residues. At S1246 the chain carries Phosphoserine. The CCHC-type zinc finger occupies P1299–D1316.

Interacts with MTOR; phosphorylates and regulates CLIP1. Interacts (via CAP-Gly domains) with tubulin and TUBA1B. Interacts with SLAIN2. Interacts with MAPRE1 and MAPRE3. Interacts (via zinc finger) with DCTN1. Binds preferentially to tyrosinated microtubules, and only marginally to detyrosinated microtubules. In terms of processing, phosphorylated. Phosphorylation induces conformational changes by increasing the affinity of the N-terminus for C-terminus, resulting in inhibition of its function thus decreasing its binding to microtubules and DCTN1. Exhibits a folded, autoinhibited conformation when phosphorylated and an open conformation when dephosphorylated with increased binding affinity to microtubules and DCTN1. Phosphorylation regulates its recruitment to tyrosinated microtubules and the recruitment of vesicular cargo to microtubules in neurons. Phosphorylation by MTOR may positively regulate CLIP1 association with microtubules.

The protein resides in the cytoplasm. The protein localises to the cytoskeleton. It localises to the cytoplasmic vesicle membrane. Its subcellular location is the cell projection. It is found in the ruffle. In terms of biological role, binds to the plus end of microtubules and regulates the dynamics of the microtubule cytoskeleton. Promotes microtubule growth and microtubule bundling. Links cytoplasmic vesicles to microtubules and thereby plays an important role in intracellular vesicle trafficking. Plays a role macropinocytosis and endosome trafficking. This Rattus norvegicus (Rat) protein is CAP-Gly domain-containing linker protein 1 (Clip1).